Reading from the N-terminus, the 446-residue chain is Elongation factor 1-alpha (446 aa).

A tr-type G domain is found at 5–230 (KNHLNLVVIG…DALDQPKRPK (226 aa)). The segment at 14 to 21 (GHVDSGKS) is G1. A GTP-binding site is contributed by 14–21 (GHVDSGKS). Residues 70–74 (GITID) form a G2 region. Residues 91-94 (DAPG) are G3. GTP-binding positions include 91–95 (DAPGH) and 153–156 (NKMD). A G4 region spans residues 153–156 (NKMD). A G5 region spans residues 194–196 (SGW).

It belongs to the TRAFAC class translation factor GTPase superfamily. Classic translation factor GTPase family. EF-Tu/EF-1A subfamily.

The protein resides in the cytoplasm. This protein promotes the GTP-dependent binding of aminoacyl-tRNA to the A-site of ribosomes during protein biosynthesis. In Stylonychia lemnae (Ciliate), this protein is Elongation factor 1-alpha (EFAA).